The following is a 444-amino-acid chain: Phosphoglucosamine mutase (444 aa).

Ser-104 serves as the catalytic Phosphoserine intermediate. Mg(2+) is bound by residues Ser-104, Asp-243, Asp-245, and Asp-247. Residue Ser-104 is modified to Phosphoserine.

It belongs to the phosphohexose mutase family. Mg(2+) serves as cofactor. Post-translationally, activated by phosphorylation.

The enzyme catalyses alpha-D-glucosamine 1-phosphate = D-glucosamine 6-phosphate. Catalyzes the conversion of glucosamine-6-phosphate to glucosamine-1-phosphate. The protein is Phosphoglucosamine mutase of Neisseria meningitidis serogroup C (strain 053442).